The primary structure comprises 622 residues: MAILSTVPALLFALASWAPTVAAQSAADYFVHELPGAPKEPFIKMHAGHVEVTPEHNGNIFFWHFQNQHIANKQRTVIWLNGGPGCSSEDGALMEIGPYRVKDPDHLEYNNGSWNEFANLLFVDNPVGTGFSFVDTNSYLHELPEMADQFVQFLEKWFAMFPEYEHDDLYISGESYAGQHIPYIAKHILERNKKPGVKTPWQLKGLLMGNAWISPKEQYDAYLKYAYEKKLIEKGSPIALQLEQQWRICRTSLAVTNTVDFTECESVLQKLLEQTAKVNAKGERECINMYDIRLRDTFPSCGMNWPPDLVNLTPYLRKAEVVSALHIKPQKTTGWTECNGAVGSAFRAPNSVPSRDYLPDLLKEVPIVLFSGAEDLICNYMGTEAMIGDMEWNGGKGFELTPGNWAPRRDWTVEGQPAGFWQEARNLTYILFYNSSHMVPFDYARRSRDMLDRFMNVDISSVGGTPTDSRLDGEQGPATSVGDIGKNGTSADAETQKKLDEAKWKAYYRSGEIVLVIVIIAAGAWGWYVWRERRKRRGYSGIMGNTPPIAQRGTTRGLEGFRDRRTGRDVETGDFDESELDDLHVTTPTVEMDKDRYSVGGDSDDEPHDEKPSRSNGGRSGR.

An N-terminal signal peptide occupies residues 1–23 (MAILSTVPALLFALASWAPTVAA). Residues 24 to 509 (QSAADYFVHE…DEAKWKAYYR (486 aa)) lie on the Lumenal side of the membrane. A glycan (N-linked (GlcNAc...) asparagine) is linked at N111. Residues S175 and D375 contribute to the active site. N-linked (GlcNAc...) asparagine glycosylation is found at N426 and N434. H437 is a catalytic residue. A disordered region spans residues 465–492 (TPTDSRLDGEQGPATSVGDIGKNGTSAD). N-linked (GlcNAc...) asparagine glycosylation occurs at N487. The chain crosses the membrane as a helical span at residues 510–530 (SGEIVLVIVIIAAGAWGWYVW). Topologically, residues 531–622 (RERRKRRGYS…SRSNGGRSGR (92 aa)) are cytoplasmic. Residues 539–622 (YSGIMGNTPP…SRSNGGRSGR (84 aa)) are disordered. Residues 559-571 (EGFRDRRTGRDVE) show a composition bias toward basic and acidic residues.

The protein belongs to the peptidase S10 family.

The protein resides in the golgi apparatus. The protein localises to the trans-Golgi network membrane. The catalysed reaction is Preferential release of a C-terminal arginine or lysine residue.. Functionally, protease with a carboxypeptidase B-like function involved in the C-terminal processing of the lysine and arginine residues from protein precursors. Promotes cell fusion and is involved in the programmed cell death. The protein is Pheromone-processing carboxypeptidase KEX1 (KEX1) of Colletotrichum graminicola (strain M1.001 / M2 / FGSC 10212) (Maize anthracnose fungus).